We begin with the raw amino-acid sequence, 498 residues long: Signal recognition particle receptor FtsY (498 aa).

Disordered regions lie at residues 1–130 (MGLF…PNQS) and 147–200 (KVES…YNRS). A compositionally biased stretch (low complexity) spans 36 to 46 (ALLAETAETAE). Residues 103 to 120 (SENSVAAVQNNTETMPSQ) are compositionally biased toward polar residues. GTP-binding positions include 301-308 (GVNGVGKT), 383-387 (DTAGR), and 447-450 (TKID).

Belongs to the GTP-binding SRP family. FtsY subfamily. In terms of assembly, part of the signal recognition particle protein translocation system, which is composed of SRP and FtsY.

Its subcellular location is the cell membrane. The protein resides in the cytoplasm. It carries out the reaction GTP + H2O = GDP + phosphate + H(+). Functionally, involved in targeting and insertion of nascent membrane proteins into the cytoplasmic membrane. Acts as a receptor for the complex formed by the signal recognition particle (SRP) and the ribosome-nascent chain (RNC). The chain is Signal recognition particle receptor FtsY from Streptococcus mutans serotype c (strain ATCC 700610 / UA159).